The sequence spans 161 residues: Putative HTH-type transcriptional regulator MT1325 (161 aa).

One can recognise an HTH rrf2-type domain in the interval 2 to 132 (RMSAKAEYAV…EETTLADVAG (131 aa)).

The polypeptide is Putative HTH-type transcriptional regulator MT1325 (Mycobacterium tuberculosis (strain CDC 1551 / Oshkosh)).